The sequence spans 117 residues: G antigen 12H (117 aa).

A disordered region spans residues 1-117 (MSWRGRSTYY…PEEGEKQSQC (117 aa)). 2 stretches are compositionally biased toward acidic residues: residues 32–45 (FSDE…EEGE) and 87–96 (ECEDGPDGQE). The segment covering 103-117 (EEVKTPEEGEKQSQC) has biased composition (basic and acidic residues).

Belongs to the GAGE family.

In Homo sapiens (Human), this protein is G antigen 12H (GAGE12H).